A 401-amino-acid polypeptide reads, in one-letter code: Beta-ketoadipyl-CoA thiolase (401 aa).

Cysteine 90 (acyl-thioester intermediate) is an active-site residue. Residues histidine 357 and cysteine 387 each act as proton acceptor in the active site.

The protein belongs to the thiolase-like superfamily. Thiolase family.

It catalyses the reaction succinyl-CoA + acetyl-CoA = 3-oxoadipyl-CoA + CoA. Its pathway is aromatic compound metabolism; beta-ketoadipate pathway; acetyl-CoA and succinyl-CoA from 3-oxoadipate: step 2/2. In terms of biological role, catalyzes thiolytic cleavage of beta-ketoadipyl-CoA to succinyl-CoA and acetyl-CoA. This Acinetobacter baylyi (strain ATCC 33305 / BD413 / ADP1) protein is Beta-ketoadipyl-CoA thiolase (catF).